The following is a 175-amino-acid chain: MYLPKEKEIIQIKSYKHNGKLHRTWKKTVVLKSTENIIIGGNDHTLVVEADGRKWVTREPSICYFHSDYWFNVISMIREDGIYHYCNLGTPFAVDEQALKYIDYDLDIKVFPDGRFHLLDEGEYEQHRRQMKYPDSIDRILKTNVDVLSHWILDKKGPFSPDYIDIWYEKYKEYR.

Catalysis depends on Arg23, which acts as the Proton donor. Residues Asn87, Asp103, Asp105, Asp107, Asp120, and Glu123 each coordinate Mg(2+).

This sequence belongs to the Ntdp family. Requires Mg(2+) as cofactor.

The catalysed reaction is a ribonucleoside 5'-triphosphate + H2O = a ribonucleoside 5'-diphosphate + phosphate + H(+). It carries out the reaction a ribonucleoside 5'-diphosphate + H2O = a ribonucleoside 5'-phosphate + phosphate + H(+). Has nucleoside phosphatase activity towards nucleoside triphosphates and nucleoside diphosphates. This Listeria innocua serovar 6a (strain ATCC BAA-680 / CLIP 11262) protein is Nucleoside triphosphate/diphosphate phosphatase.